We begin with the raw amino-acid sequence, 303 residues long: MSATQAAPARDRLRIAIQKSGRLAEPARNLLSACGLSWRESRDKLFCYGESLPVDLLLVRDDDIPGLIADGVCDLGIVGRNELDEQAAARRQIGLPDAYQALRGLGFGQCRLMLAVPEEWQWQGPAQLAGTRIATSYPAILKQWLAEQGVDAQVVELSGSVEIAPRLGTADLICDLVSSGATLRANQLAPVHNLLDSEAVLAGAVRAPDDARGALRSMLLRRLDGVVQRQDRKLLMFRASEDRVDALAQLLVDAEPLVRLPADGGALRLQTMCPGPLSWQRMEELERAGAQGLMVLSVERSLA.

This sequence belongs to the ATP phosphoribosyltransferase family. Long subfamily. The cofactor is Mg(2+).

Its subcellular location is the cytoplasm. The catalysed reaction is 1-(5-phospho-beta-D-ribosyl)-ATP + diphosphate = 5-phospho-alpha-D-ribose 1-diphosphate + ATP. Its pathway is amino-acid biosynthesis; L-histidine biosynthesis; L-histidine from 5-phospho-alpha-D-ribose 1-diphosphate: step 1/9. Feedback inhibited by histidine. Its function is as follows. Catalyzes the condensation of ATP and 5-phosphoribose 1-diphosphate to form N'-(5'-phosphoribosyl)-ATP (PR-ATP). Has a crucial role in the pathway because the rate of histidine biosynthesis seems to be controlled primarily by regulation of HisG enzymatic activity. The polypeptide is ATP phosphoribosyltransferase (Stenotrophomonas maltophilia (strain R551-3)).